A 233-amino-acid polypeptide reads, in one-letter code: Putative 26S proteasome non-ATPase regulatory subunit 8 homolog B (233 aa).

Position 1 is an N-acetylmethionine (methionine 1). The region spanning aspartate 38–glutamine 217 is the PCI domain.

The protein belongs to the proteasome subunit S14 family. As to quaternary structure, component of the 19S regulatory particle (RP/PA700) lid subcomplex of the 26S proteasome. The 26S proteasome is composed of a core protease (CP), known as the 20S proteasome, capped at one or both ends by the 19S regulatory particle (RP/PA700). The RP/PA700 complex is composed of at least 17 different subunits in two subcomplexes, the base and the lid, which form the portions proximal and distal to the 20S proteolytic core, respectively. Interacts with UCH1 and UCH2.

In terms of biological role, acts as a regulatory subunit of the 26S proteasome which is involved in the ATP-dependent degradation of ubiquitinated proteins. The protein is Putative 26S proteasome non-ATPase regulatory subunit 8 homolog B of Arabidopsis thaliana (Mouse-ear cress).